We begin with the raw amino-acid sequence, 556 residues long: 2-succinyl-5-enolpyruvyl-6-hydroxy-3-cyclohexene-1-carboxylate synthase (556 aa).

The protein belongs to the TPP enzyme family. MenD subfamily. As to quaternary structure, homodimer. Mg(2+) is required as a cofactor. It depends on Mn(2+) as a cofactor. Requires thiamine diphosphate as cofactor.

The catalysed reaction is isochorismate + 2-oxoglutarate + H(+) = 5-enolpyruvoyl-6-hydroxy-2-succinyl-cyclohex-3-ene-1-carboxylate + CO2. Its pathway is quinol/quinone metabolism; 1,4-dihydroxy-2-naphthoate biosynthesis; 1,4-dihydroxy-2-naphthoate from chorismate: step 2/7. It functions in the pathway quinol/quinone metabolism; menaquinone biosynthesis. Functionally, catalyzes the thiamine diphosphate-dependent decarboxylation of 2-oxoglutarate and the subsequent addition of the resulting succinic semialdehyde-thiamine pyrophosphate anion to isochorismate to yield 2-succinyl-5-enolpyruvyl-6-hydroxy-3-cyclohexene-1-carboxylate (SEPHCHC). This chain is 2-succinyl-5-enolpyruvyl-6-hydroxy-3-cyclohexene-1-carboxylate synthase, found in Escherichia coli (strain ATCC 8739 / DSM 1576 / NBRC 3972 / NCIMB 8545 / WDCM 00012 / Crooks).